The sequence spans 433 residues: L-2-hydroxyglutarate dehydrogenase, mitochondrial (433 aa).

The protein belongs to the L2HGDH family. FAD is required as a cofactor.

The protein localises to the mitochondrion. It carries out the reaction (S)-2-hydroxyglutarate + A = 2-oxoglutarate + AH2. The protein is L-2-hydroxyglutarate dehydrogenase, mitochondrial of Caenorhabditis elegans.